Here is a 400-residue protein sequence, read N- to C-terminus: Protein phosphatase methylesterase 1 (400 aa).

The disordered stretch occupies residues Asp32–Glu70. An AB hydrolase-1 domain is found at Pro114–Ser365. Catalysis depends on residues Ser205, Asp233, and His359.

This sequence belongs to the AB hydrolase superfamily. As to quaternary structure, interacts with and inactivates the phosphatase PP2A-like catalytic subunits PPG1, PPH21, PPH22, PPH3 and SIT4.

It catalyses the reaction [phosphatase 2A protein]-C-terminal L-leucine methyl ester + H2O = [phosphatase 2A protein]-C-terminal L-leucine + methanol + H(+). In terms of biological role, demethylates proteins that have been reversibly carboxymethylated. Demethylates the phosphatase PP2A catalytic subunits PPH21 and PPH22. Forms inactive complexes (PP2Ai) with phosphatase PP2A-like catalytic subunits. Involved in the regulation of cell cycle progression at START. The chain is Protein phosphatase methylesterase 1 (PPE1) from Saccharomyces cerevisiae (strain ATCC 204508 / S288c) (Baker's yeast).